Here is a 354-residue protein sequence, read N- to C-terminus: Holliday junction branch migration complex subunit RuvB (354 aa).

Positions 4-191 are large ATPase domain (RuvB-L); the sequence is TDKLAAPARV…FGIVARLEFY (188 aa). Residues L30, R31, G72, K75, T76, T77, 138–140, R181, Y191, and R228 each bind ATP; that span reads EDY. Position 76 (T76) interacts with Mg(2+). The segment at 192–262 is small ATPAse domain (RuvB-S); that stretch reads TAEELARIVT…MADAALAMLD (71 aa). Residues 265 to 354 form a head domain (RuvB-H) region; it reads RVGFDLMDRK…GDAGELFGDA (90 aa). DNA-binding residues include R301, R320, and R325.

It belongs to the RuvB family. In terms of assembly, homohexamer. Forms an RuvA(8)-RuvB(12)-Holliday junction (HJ) complex. HJ DNA is sandwiched between 2 RuvA tetramers; dsDNA enters through RuvA and exits via RuvB. An RuvB hexamer assembles on each DNA strand where it exits the tetramer. Each RuvB hexamer is contacted by two RuvA subunits (via domain III) on 2 adjacent RuvB subunits; this complex drives branch migration. In the full resolvosome a probable DNA-RuvA(4)-RuvB(12)-RuvC(2) complex forms which resolves the HJ.

It localises to the cytoplasm. The catalysed reaction is ATP + H2O = ADP + phosphate + H(+). Functionally, the RuvA-RuvB-RuvC complex processes Holliday junction (HJ) DNA during genetic recombination and DNA repair, while the RuvA-RuvB complex plays an important role in the rescue of blocked DNA replication forks via replication fork reversal (RFR). RuvA specifically binds to HJ cruciform DNA, conferring on it an open structure. The RuvB hexamer acts as an ATP-dependent pump, pulling dsDNA into and through the RuvAB complex. RuvB forms 2 homohexamers on either side of HJ DNA bound by 1 or 2 RuvA tetramers; 4 subunits per hexamer contact DNA at a time. Coordinated motions by a converter formed by DNA-disengaged RuvB subunits stimulates ATP hydrolysis and nucleotide exchange. Immobilization of the converter enables RuvB to convert the ATP-contained energy into a lever motion, pulling 2 nucleotides of DNA out of the RuvA tetramer per ATP hydrolyzed, thus driving DNA branch migration. The RuvB motors rotate together with the DNA substrate, which together with the progressing nucleotide cycle form the mechanistic basis for DNA recombination by continuous HJ branch migration. Branch migration allows RuvC to scan DNA until it finds its consensus sequence, where it cleaves and resolves cruciform DNA. The polypeptide is Holliday junction branch migration complex subunit RuvB (Cupriavidus taiwanensis (strain DSM 17343 / BCRC 17206 / CCUG 44338 / CIP 107171 / LMG 19424 / R1) (Ralstonia taiwanensis (strain LMG 19424))).